A 568-amino-acid chain; its full sequence is Oxygen-dependent choline dehydrogenase (568 aa).

8–37 is a binding site for FAD; the sequence is DYIIIGAGSAGNTLAARLTEDAGVTVLLLE. Catalysis depends on H477, which acts as the Proton acceptor.

The protein belongs to the GMC oxidoreductase family. Requires FAD as cofactor.

The enzyme catalyses choline + A = betaine aldehyde + AH2. It carries out the reaction betaine aldehyde + NAD(+) + H2O = glycine betaine + NADH + 2 H(+). The protein operates within amine and polyamine biosynthesis; betaine biosynthesis via choline pathway; betaine aldehyde from choline (cytochrome c reductase route): step 1/1. Its function is as follows. Involved in the biosynthesis of the osmoprotectant glycine betaine. Catalyzes the oxidation of choline to betaine aldehyde and betaine aldehyde to glycine betaine at the same rate. This Pseudomonas savastanoi pv. phaseolicola (strain 1448A / Race 6) (Pseudomonas syringae pv. phaseolicola (strain 1448A / Race 6)) protein is Oxygen-dependent choline dehydrogenase.